Here is a 536-residue protein sequence, read N- to C-terminus: Pre-mRNA-splicing regulator female-lethal(2)D (536 aa).

A disordered region spans residues 1–91 (MSVAAMTMDD…LQQQQQQQQQ (91 aa)). Residues 28-39 (QNLNILNSSQNS) show a composition bias toward low complexity. Over residues 57–69 (HHHHHPHPHHHHH) the composition is skewed to basic residues. The segment covering 72-91 (QQQQQQQQQHLQQQQQQQQQ) has biased composition (low complexity). Residues 254–319 (KSFSEEVKKS…KQAIKDEVVA (66 aa)) are a coiled coil. The segment at 424–450 (APRTLPPKKSKLRGITTRRNSQLEEDH) is disordered.

Belongs to the fl(2)d family. Component of the WMM complex, a N6-methyltransferase complex composed of a catalytic subcomplex, named MAC, and of an associated subcomplex, named MACOM. The MAC subcomplex is composed of Ime4/Mettl3 and Mettl14. The MACOM subcomplex is composed of fl(2)d, Flacc/Xio, Hakai, vir, and, in some cases of nito. Interacts with vir and msk. Part of a complex containing fl(2)d, Sxl and vir.

The protein localises to the nucleus. Associated component of the WMM complex, a complex that mediates N6-methyladenosine (m6A) methylation of mRNAs, a modification that plays a role in the efficiency of mRNA splicing and is required for sex determination. Required for sex determination and dosage compensation via Sxl alternative splicing: m6A methylation acts as a key regulator of Sxl pre-mRNA and promotes female-specific alternative splicing of Sxl, which determines female physiognomy. M6A methylation is also required for neuronal functions. Required for proper inclusion of regulated exons in Ubx transcripts, leading to isoforms Ia/b and IIa/b. The chain is Pre-mRNA-splicing regulator female-lethal(2)D from Drosophila melanogaster (Fruit fly).